The following is a 647-amino-acid chain: Threonine--tRNA ligase (647 aa).

The 61-residue stretch at 1–61 (MINITFPDGA…TEDGSIEIVT (61 aa)) folds into the TGS domain. The tract at residues 242-540 (DHRKLGKELD…LIENYKGAFP (299 aa)) is catalytic. Residues cysteine 336, histidine 387, and histidine 517 each coordinate Zn(2+).

The protein belongs to the class-II aminoacyl-tRNA synthetase family. In terms of assembly, homodimer. The cofactor is Zn(2+).

Its subcellular location is the cytoplasm. It carries out the reaction tRNA(Thr) + L-threonine + ATP = L-threonyl-tRNA(Thr) + AMP + diphosphate + H(+). Catalyzes the attachment of threonine to tRNA(Thr) in a two-step reaction: L-threonine is first activated by ATP to form Thr-AMP and then transferred to the acceptor end of tRNA(Thr). Also edits incorrectly charged L-seryl-tRNA(Thr). This Streptococcus pneumoniae (strain ATCC 700669 / Spain 23F-1) protein is Threonine--tRNA ligase.